A 507-amino-acid chain; its full sequence is ATP synthase subunit alpha, chloroplastic (507 aa).

Position 170–177 (Gly-170–Thr-177) interacts with ATP.

It belongs to the ATPase alpha/beta chains family. As to quaternary structure, F-type ATPases have 2 components, CF(1) - the catalytic core - and CF(0) - the membrane proton channel. CF(1) has five subunits: alpha(3), beta(3), gamma(1), delta(1), epsilon(1). CF(0) has four main subunits: a, b, b' and c.

The protein resides in the plastid. It is found in the chloroplast thylakoid membrane. The enzyme catalyses ATP + H2O + 4 H(+)(in) = ADP + phosphate + 5 H(+)(out). In terms of biological role, produces ATP from ADP in the presence of a proton gradient across the membrane. The alpha chain is a regulatory subunit. The polypeptide is ATP synthase subunit alpha, chloroplastic (Phalaenopsis aphrodite subsp. formosana (Moth orchid)).